Here is a 339-residue protein sequence, read N- to C-terminus: MSTNKITFLLNWEAAPYHIPVYLANIKGYFKDENLDIAILEPSNPSDVTELVGSGKVDMGLKAMVHTLAAKARGFPVTSIGSLLDEPFTGICYLEGSGITSDFQSLKGKRIGYVGEFGKIQVDELTKHYGMTPDDYVAVRCGMNVAKYILEGTIDCGIGIECIQQVELEEALKEQGKDSNDAKMLRIDKLAELGCCCFCTILYIANDKFIAENPQAVKKFLKAIKRATDYMLAHPREAWAEYGNFKPTMQTDLNTKKFQRCYAYFSESLYNVHRDWRKVNNYGKRLDILPENYVPNYTNEYLSWPEPKEVDDPEKAQDLMLKHQEECKTCGGYKRLVLA.

The residue at position 62 (Lys62) is an N6-(pyridoxal phosphate)lysine. His66 is an active-site residue. Position 115–118 (115–118) interacts with pyridoxal 5'-phosphate; that stretch reads GEFG. Residues 195–199 carry the CCCFC; essential for catalytic activity, may be the site of iron coordination motif; that stretch reads CCCFC.

It belongs to the NMT1/THI5 family. Homodimer. It depends on Fe(3+) as a cofactor.

The catalysed reaction is N(6)-(pyridoxal phosphate)-L-lysyl-[4-amino-5-hydroxymethyl-2-methylpyrimidine phosphate synthase] + L-histidyl-[4-amino-5-hydroxymethyl-2-methylpyrimidine phosphate synthase] + 2 Fe(3+) + 4 H2O = L-lysyl-[4-amino-5-hydroxymethyl-2-methylpyrimidine phosphate synthase] + (2S)-2-amino-5-hydroxy-4-oxopentanoyl-[4-amino-5-hydroxymethyl-2-methylpyrimidine phosphate synthase] + 4-amino-2-methyl-5-(phosphooxymethyl)pyrimidine + 3-oxopropanoate + 2 Fe(2+) + 2 H(+). The protein operates within cofactor biosynthesis; thiamine diphosphate biosynthesis. In terms of biological role, responsible for the formation of the pyrimidine heterocycle in the thiamine biosynthesis pathway. Catalyzes the formation of hydroxymethylpyrimidine phosphate (HMP-P) from histidine and pyridoxal phosphate (PLP). The protein uses PLP and the active site histidine to form HMP-P, generating an inactive enzyme. The enzyme can only undergo a single turnover, which suggests it is a suicide enzyme. The chain is 4-amino-5-hydroxymethyl-2-methylpyrimidine phosphate synthase from Candida albicans (strain WO-1) (Yeast).